The chain runs to 487 residues: MPTFYLALHGGQTYHLIVDTDSLGNPSLSVIPSNPYQEQLSDTPLIPLTIFVGENTGVPPPLPPPPPPPPPPPPPPPPPPPPPPPPPPSPPPPPPPPPPPQRRDAWTQEPSPLDRDPLGYDVGHGPLASAMRMLWMANYIVRQSRGDRGLILPQGPQTAPQARLVQPHVPPLRPTAPTILSPLSQPRLTPPQPLMMPPRPTPPTPLPPATLTVPPRPTRPTTLPPTPLLTVLQRPTELQPTPSPPRMHLPVLHVPDQSMHPLTHQSTPNDPDSPEPRSPTVFYNIPPMPLPPSQLPPPAAPAQPPPGVINDQQLHHLPSGPPWWPPICDPPQPSKTQGQSRGQSRGRGRGRGRGRGKGKSRDKQRKPGGPWRPEPNTSSPSMPELSPVLGLHQGQGAGDSPTPGPSNAAPVCRNSHTATPNVSPIHEPESHNSPEAPILFPDDWYPPSIDPADLDESWDYIFETTESPSSDEDYVEGPSKRPRPSIQ.

Residues Met1–Thr210 form an SMARCB1/INI1 binding region. 2 disordered regions span residues Val52–Asp121 and Ser258–Gln487. The span at Val58–Pro100 shows a compositional bias: pro residues. The segment covering Gln101–Leu118 has biased composition (basic and acidic residues). 2 stretches are compositionally biased toward pro residues: residues Pro286–Gly307 and Ser319–Pro333. The span at Ser344 to Lys366 shows a compositional bias: basic residues. 7 consecutive repeat copies span residues Arg345–Gly346, Arg347–Gly348, Arg349–Gly350, Arg351–Gly352, Arg353–Gly354, Arg355–Gly356, and Lys357–Gly358. The interval Arg345–Gly358 is 6.5 X 2 AA tandem repeats of R-G. 2 consecutive short sequence motifs (PXLXP motif, interaction with host ZMYND11) follow at residues Pro383–Pro387 and Pro437–Pro441.

It belongs to the herpesviridae EBNA2 family. As to quaternary structure, interacts with human SMARCB1/INI1, presumably generating an open chromatin conformation at the EBNA2-responsive target genes. Interacts with human WAPL. Interacts with host CBF1; this interaction allows transcriptional activation by EBNA2. Interacts with host general transcription factors GTF2B, ERCC2 and ERCC3. Interacts (via PXLXP motif) with host ZMYND11/BS69 (via MYND-type zinc finger). Interacts with host EBF1. Phosphorylated.

The protein resides in the host nucleus matrix. In terms of biological role, plays a key role in the activation of the host resting B-cell and stimulation of B-cell proliferation. Acts by up-regulating the expression of viral EBNA1-6, LMP1, LMP2A and LMP2B genes, as well as several host genes including CD21, CD23 and MYC. Activates transcription by acting as an adapter molecule that binds to cellular sequence-specific DNA-binding proteins such as host CBF1, SMARCB1 and SPI1. Once EBNA2 is near promoter sites, its acidic activating domain recruits basal and activation-associated transcription factors TFIIB, TAF40, TFIIH components ERCC2 and ERCC3, and CBP in order to promote transcription. Alternatively, EBNA2 can affect activities of cell cycle regulators and retard cell cycle progression at G2/M phase. It also induces chromosomal instability, by disrupting mitotic checkpoints, multi-nucleation and formation of micronuclei in infected cells. In Homo sapiens (Human), this protein is Epstein-Barr nuclear antigen 2 (EBNA2).